The chain runs to 79 residues: UPF0349 protein BCE_5075 (79 aa).

The protein belongs to the UPF0349 family.

This is UPF0349 protein BCE_5075 from Bacillus cereus (strain ATCC 10987 / NRS 248).